The primary structure comprises 296 residues: Nitrogenase iron protein (296 aa).

An ATP-binding site is contributed by 11–18 (GKGGIGKS). Cys-99 provides a ligand contact to [4Fe-4S] cluster. Arg-102 is subject to ADP-ribosylarginine; by dinitrogenase reductase ADP-ribosyltransferase. Cys-133 contacts [4Fe-4S] cluster.

The protein belongs to the NifH/BchL/ChlL family. Homodimer. It depends on [4Fe-4S] cluster as a cofactor. In terms of processing, the reversible ADP-ribosylation of Arg-102 inactivates the nitrogenase reductase and regulates nitrogenase activity.

It catalyses the reaction N2 + 8 reduced [2Fe-2S]-[ferredoxin] + 16 ATP + 16 H2O = H2 + 8 oxidized [2Fe-2S]-[ferredoxin] + 2 NH4(+) + 16 ADP + 16 phosphate + 6 H(+). The key enzymatic reactions in nitrogen fixation are catalyzed by the nitrogenase complex, which has 2 components: the iron protein and the molybdenum-iron protein. This Sinorhizobium fredii (strain NBRC 101917 / NGR234) protein is Nitrogenase iron protein (nifH1).